The chain runs to 783 residues: ATP-dependent zinc metalloprotease FtsH (783 aa).

Residues 1-16 (MSETPNTNEQNNPNNQ) show a composition bias toward low complexity. Residues 1–79 (MSETPNTNEQ…DKEEDFASRL (79 aa)) form a disordered region. At 1–86 (MSETPNTNEQ…SRLNTRPPQR (86 aa)) the chain is on the cytoplasmic side. The span at 35–61 (MPERPERHNQADGAPKRPGDDDRKSER) shows a compositional bias: basic and acidic residues. A helical transmembrane segment spans residues 87–107 (ASIITIIIIFLVAFFIGSQMM). Residues 108-233 (NMVHGEETDD…EYQVTLPSNV (126 aa)) lie on the Extracellular side of the membrane. Residues 234 to 254 (TEILISVLPMLLFAGLLIYFF) traverse the membrane as a helical segment. Over 255–783 (SQMSKANNSQ…APQPPAAPQQ (529 aa)) the chain is Cytoplasmic. 325–332 (GPPGTGKT) contributes to the ATP binding site. Position 547 (His547) interacts with Zn(2+). Glu548 is an active-site residue. Positions 551 and 623 each coordinate Zn(2+). Residues 738–771 (EAAAKAADQAEQPQVEAEPVAQVATPAAPVAPAV) are compositionally biased toward low complexity. The disordered stretch occupies residues 738–783 (EAAAKAADQAEQPQVEAEPVAQVATPAAPVAPAVPEAPQPPAAPQQ). Residues 772 to 783 (PEAPQPPAAPQQ) are compositionally biased toward pro residues.

The protein in the central section; belongs to the AAA ATPase family. This sequence in the C-terminal section; belongs to the peptidase M41 family. In terms of assembly, homohexamer. Requires Zn(2+) as cofactor.

The protein resides in the cell membrane. Acts as a processive, ATP-dependent zinc metallopeptidase for both cytoplasmic and membrane proteins. Plays a role in the quality control of integral membrane proteins. The protein is ATP-dependent zinc metalloprotease FtsH of Slackia heliotrinireducens (strain ATCC 29202 / DSM 20476 / NCTC 11029 / RHS 1) (Peptococcus heliotrinreducens).